Here is a 698-residue protein sequence, read N- to C-terminus: Ubiquitin-like modifier-activating enzyme ATG7 (698 aa).

The short motif at 11 to 13 (FAP) is the FAP motif element. K41 participates in a covalent cross-link: Glycyl lysine isopeptide (Lys-Gly) (interchain with G-Cter in ubiquitin). C567 serves as the catalytic Glycyl thioester intermediate. Phosphoserine is present on S693.

Belongs to the ATG7 family. As to quaternary structure, homodimer. Interacts with ATG3; this interaction is essential for the transfer of ATG8-like proteins's thioester from ATG7 to ATG3 and plays a role in the conjugation of ATG12 to ATG5. Interacts with ATG12. Forms intermediate conjugates with GABARAPL1. Forms intermediate conjugates with ATG8-like proteins such as GABARAP, GABARAPL2 or MAP1LC3A. Interacts with EP300 acetyltransferase. Interacts with FOXO1. Acetylated by EP300. In terms of processing, polyubiquitinated on Lys-41 via 'Lys-63'-linked ubiquitin by TRIM32; this modification positiely regulates ATG8 and ATG12 activating enzyme activity leading to initiation of autophagy under metabolic stress. In terms of tissue distribution, widely expressed.

Its subcellular location is the cytoplasm. It is found in the preautophagosomal structure. E1-like activating enzyme involved in the 2 ubiquitin-like systems required for cytoplasm to vacuole transport (Cvt) and autophagy. Activates ATG12 for its conjugation with ATG5 as well as the ATG8 family proteins for their conjugation with phosphatidylethanolamine. Both systems are needed for the ATG8 association to Cvt vesicles and autophagosomes membranes. Required for autophagic death induced by caspase-8 inhibition. Facilitates LC3-I lipidation with phosphatidylethanolamine to form LC3-II which is found on autophagosomal membranes. Required for mitophagy which contributes to regulate mitochondrial quantity and quality by eliminating the mitochondria to a basal level to fulfill cellular energy requirements and preventing excess ROS production. Modulates p53/TP53 activity to regulate cell cycle and survival during metabolic stress. Also plays a key role in the maintenance of axonal homeostasis, the prevention of axonal degeneration, the maintenance of hematopoietic stem cells, the formation of Paneth cell granules, as well as in adipose differentiation. Plays a role in regulating the liver clock and glucose metabolism by mediating the autophagic degradation of CRY1 (clock repressor) in a time-dependent manner. This is Ubiquitin-like modifier-activating enzyme ATG7 from Rattus norvegicus (Rat).